A 951-amino-acid polypeptide reads, in one-letter code: MPGPLGLLCFLALGLRGSAEPSGAAPPLCAAPCSCDGDRRVDCSGKGLTAVPEGLSAFTQLLDISMNNITQLPEDAFKNFPFLEELRLAGNDLSFIHPKALSGLKELKVLTLQNNQLKTVPSEAIRGLSSLQSLRLDANHITSVPEDSFEGLTQLRHLWLDDNSLTEVPVHPLSNLPTLQALTLALNKISSIPDFAFTNLSSLVVLHLHNNKIKSLGQHCFDGLDNLETLDLNYNNLGEFPQAIKALPSLKELLFHSNSISVIPDGAFDGNPLLKTIHLYDNPLSFVGNSAFHNLSELHSLVIRGASMVQRFPNLTGTVRLESLTLTGTKISSISNNLCQEQKRLRTLDLSYNSIKDLPSFNGCHALEEISLQRNQIHQIKEDTFQGLTSLKILDLSRNLIHEIDDRAFAKLGSITNLDVSFNELTSFPTEGLNGLNQLKLVGNFKLKEALAAKDFVNLRSLSVPYAYQCCAFWGCDSYTHSNTEDNSLQDHSGSKDKGLSDVAGVTSSAENEEHSQIIIHCTPSTGAFKPCEYLLGSWMIRLTVWFIFLVALFFNLLVILTTFASCTSVPSSKLFIGLISVSNLFMGAYTGILTFLDAVSWGRFAEFGIWWEIGSGCKIAGFLAVFSSESAIFLLMLAAVERSLSAKDMMKNGKSNHLRQFRIAALLAFLGAAVAGSFPLFHRGEYSASPLCLPFPTGETPSLGFTVTLVLLNSLAFLLMAIIYTKLYCNLEKEDLSESSQSSMIKHVAWLIFTNCIFFCPVAFFSFAPLITAVSISPEIMKSVTLIFFPLPACLNPVLYVFFNPKFKEDWKLLKRHVSKKSGSASVSISSQAGCVEQDFYYDCGMYSHLQGNLTVCDCCEAFLLTKPVSCKHLIKSHSCPALTVGSCQRPDGYWSDCGTQSAHSDYADEEDSFVSDSSDQVQACGRACFYQSRGFPLVRYAYNLPRVKD.

Positions 1–19 (MPGPLGLLCFLALGLRGSA) are cleaved as a signal peptide. At 20 to 544 (EPSGAAPPLC…LLGSWMIRLT (525 aa)) the chain is on the extracellular side. In terms of domain architecture, LRRNT spans 25–57 (APPLCAAPCSCDGDRRVDCSGKGLTAVPEGLSA). Cystine bridges form between Cys-29-Cys-35 and Cys-33-Cys-43. LRR repeat units follow at residues 35-58 (CDGDRRVDCSGKGLTAVPEGLSAF), 59-79 (TQLLDISMNNITQLPEDAFKN), 81-103 (PFLEELRLAGNDLSFIHPKALSG), 104-127 (LKELKVLTLQNNQLKTVPSEAIRG), 128-151 (LSSLQSLRLDANHITSVPEDSFEG), 153-175 (TQLRHLWLDDNSLTEVPVHPLSN), 176-199 (LPTLQALTLALNKISSIPDFAFTN), 201-223 (SSLVVLHLHNNKIKSLGQHCFDG), 224-247 (LDNLETLDLNYNNLGEFPQAIKAL), 248-270 (PSLKELLFHSNSISVIPDGAFDG), and 272-294 (PLLKTIHLYDNPLSFVGNSAFHN). A glycan (N-linked (GlcNAc...) asparagine) is linked at Asn-68. Asn-199 carries an N-linked (GlcNAc...) asparagine glycan. Residues Asn-294 and Asn-314 are each glycosylated (N-linked (GlcNAc...) asparagine). 5 LRR repeats span residues 318 to 341 (TVRLESLTLTGTKISSISNNLCQE), 342 to 363 (QKRLRTLDLSYNSIKDLPSFNG), 364 to 387 (CHALEEISLQRNQIHQIKEDTFQG), 388 to 411 (LTSLKILDLSRNLIHEIDDRAFAK), and 413 to 435 (GSITNLDVSFNELTSFPTEGLNG). A disulfide bridge links Cys-339 with Cys-364. 2 disulfide bridges follow: Cys-470–Cys-522 and Cys-471–Cys-476. Residues 545–565 (VWFIFLVALFFNLLVILTTFA) traverse the membrane as a helical segment. Residues 566–575 (SCTSVPSSKL) are Cytoplasmic-facing. A helical membrane pass occupies residues 576 to 596 (FIGLISVSNLFMGAYTGILTF). Over 597–619 (LDAVSWGRFAEFGIWWEIGSGCK) the chain is Extracellular. Cys-618 and Cys-693 form a disulfide bridge. The helical transmembrane segment at 620-640 (IAGFLAVFSSESAIFLLMLAA) threads the bilayer. Residues 641–661 (VERSLSAKDMMKNGKSNHLRQ) lie on the Cytoplasmic side of the membrane. Residues 662-682 (FRIAALLAFLGAAVAGSFPLF) traverse the membrane as a helical segment. Residues 683–703 (HRGEYSASPLCLPFPTGETPS) lie on the Extracellular side of the membrane. A helical membrane pass occupies residues 704–724 (LGFTVTLVLLNSLAFLLMAII). At 725–756 (YTKLYCNLEKEDLSESSQSSMIKHVAWLIFTN) the chain is on the cytoplasmic side. A helical membrane pass occupies residues 757 to 777 (CIFFCPVAFFSFAPLITAVSI). Topologically, residues 778–783 (SPEIMK) are extracellular. A helical membrane pass occupies residues 784–804 (SVTLIFFPLPACLNPVLYVFF). Over 805-951 (NPKFKEDWKL…YAYNLPRVKD (147 aa)) the chain is Cytoplasmic. A Phosphoserine modification is found at Ser-920.

This sequence belongs to the G-protein coupled receptor 1 family.

The protein localises to the cell membrane. Its function is as follows. Receptor for R-spondins that potentiates the canonical Wnt signaling pathway and is involved in the formation of various organs. Upon binding to R-spondins (RSPO1, RSPO2, RSPO3 or RSPO4), associates with phosphorylated LRP6 and frizzled receptors that are activated by extracellular Wnt receptors, triggering the canonical Wnt signaling pathway to increase expression of target genes. In contrast to classical G-protein coupled receptors, does not activate heterotrimeric G-proteins to transduce the signal. Its function as activator of the Wnt signaling pathway is required for the development of various organs, including liver, kidney, intestine, bone, reproductive tract and eye. May also act as a receptor for norrin (NDP), such results however required additional confirmation in vivo. Required during spermatogenesis to activate the Wnt signaling pathway in peritubular myoid cells. Required for the maintenance of intestinal stem cells and Paneth cell differentiation in postnatal intestinal crypts. Acts as a regulator of bone formation and remodeling. Involved in kidney development; required for maintaining the ureteric bud in an undifferentiated state. Involved in the development of the anterior segment of the eye. Required during erythropoiesis. Also acts as a negative regulator of innate immunity by inhibiting TLR2/TLR4 associated pattern-recognition and pro-inflammatory cytokine production. Plays an important role in regulating the circadian rhythms of plasma lipids, partially through regulating the rhythmic expression of MTTP. Required for proper development of GnRH neurons (gonadotropin-releasing hormone expressing neurons) that control the release of reproductive hormones from the pituitary gland. This chain is Leucine-rich repeat-containing G-protein coupled receptor 4 (LGR4), found in Bos taurus (Bovine).